Here is a 106-residue protein sequence, read N- to C-terminus: Biogenesis of lysosome-related organelles complex 1 subunit 4 (106 aa).

The stretch at 53-106 forms a coiled coil; the sequence is THSEGLSEQLKMTEKNILEMENLFDQIDQLCLFVQKAKSDLDKLEKLYNVVDRQ.

This sequence belongs to the BLOC1S4 family. As to quaternary structure, component of the biogenesis of lysosome-related organelles complex-1 (BLOC-1) composed at least of blos-1, blos-2, blos-4, dsbn-1, glo-2, mutd-1 and snpn-1. Interacts with glo-2.

In terms of biological role, component of the biogenesis of lysosome-related organelles complex-1 (BLOC-1) involved in gut granule biogenesis. The chain is Biogenesis of lysosome-related organelles complex 1 subunit 4 (blos-4) from Caenorhabditis elegans.